The primary structure comprises 285 residues: 2,3,4,5-tetrahydropyridine-2,6-dicarboxylate N-succinyltransferase (285 aa).

It belongs to the transferase hexapeptide repeat family.

It is found in the cytoplasm. It carries out the reaction (S)-2,3,4,5-tetrahydrodipicolinate + succinyl-CoA + H2O = (S)-2-succinylamino-6-oxoheptanedioate + CoA. It functions in the pathway amino-acid biosynthesis; L-lysine biosynthesis via DAP pathway; LL-2,6-diaminopimelate from (S)-tetrahydrodipicolinate (succinylase route): step 1/3. The chain is 2,3,4,5-tetrahydropyridine-2,6-dicarboxylate N-succinyltransferase from Beijerinckia indica subsp. indica (strain ATCC 9039 / DSM 1715 / NCIMB 8712).